The following is a 276-amino-acid chain: Tryptophan synthase alpha chain (276 aa).

Residues Glu55 and Asp66 each act as proton acceptor in the active site.

This sequence belongs to the TrpA family. Tetramer of two alpha and two beta chains.

It catalyses the reaction (1S,2R)-1-C-(indol-3-yl)glycerol 3-phosphate + L-serine = D-glyceraldehyde 3-phosphate + L-tryptophan + H2O. It participates in amino-acid biosynthesis; L-tryptophan biosynthesis; L-tryptophan from chorismate: step 5/5. The alpha subunit is responsible for the aldol cleavage of indoleglycerol phosphate to indole and glyceraldehyde 3-phosphate. In Gloeobacter violaceus (strain ATCC 29082 / PCC 7421), this protein is Tryptophan synthase alpha chain.